We begin with the raw amino-acid sequence, 219 residues long: 2-hydroxy-3-keto-5-methylthiopentenyl-1-phosphate phosphatase (219 aa).

Belongs to the HAD-like hydrolase superfamily. MtnX family.

The enzyme catalyses 2-hydroxy-5-methylsulfanyl-3-oxopent-1-enyl phosphate + H2O = 1,2-dihydroxy-5-(methylsulfanyl)pent-1-en-3-one + phosphate. It functions in the pathway amino-acid biosynthesis; L-methionine biosynthesis via salvage pathway; L-methionine from S-methyl-5-thio-alpha-D-ribose 1-phosphate: step 4/6. Functionally, dephosphorylates 2-hydroxy-3-keto-5-methylthiopentenyl-1-phosphate (HK-MTPenyl-1-P) yielding 1,2-dihydroxy-3-keto-5-methylthiopentene (DHK-MTPene). The chain is 2-hydroxy-3-keto-5-methylthiopentenyl-1-phosphate phosphatase from Bacillus mycoides (strain KBAB4) (Bacillus weihenstephanensis).